The chain runs to 198 residues: Ribonuclease HII (198 aa).

The RNase H type-2 domain maps to 1-198 (MLCGIDEAGR…QRRSFFVKNL (198 aa)). A divalent metal cation-binding residues include aspartate 6, glutamate 7, and aspartate 112.

The protein belongs to the RNase HII family. Mn(2+) serves as cofactor. It depends on Mg(2+) as a cofactor.

It localises to the cytoplasm. It carries out the reaction Endonucleolytic cleavage to 5'-phosphomonoester.. In terms of biological role, endonuclease that specifically degrades the RNA of RNA-DNA hybrids. This Treponema denticola (strain ATCC 35405 / DSM 14222 / CIP 103919 / JCM 8153 / KCTC 15104) protein is Ribonuclease HII.